The primary structure comprises 100 residues: Aspartyl/glutamyl-tRNA(Asn/Gln) amidotransferase subunit C (100 aa).

This sequence belongs to the GatC family. Heterotrimer of A, B and C subunits.

The catalysed reaction is L-glutamyl-tRNA(Gln) + L-glutamine + ATP + H2O = L-glutaminyl-tRNA(Gln) + L-glutamate + ADP + phosphate + H(+). The enzyme catalyses L-aspartyl-tRNA(Asn) + L-glutamine + ATP + H2O = L-asparaginyl-tRNA(Asn) + L-glutamate + ADP + phosphate + 2 H(+). In terms of biological role, allows the formation of correctly charged Asn-tRNA(Asn) or Gln-tRNA(Gln) through the transamidation of misacylated Asp-tRNA(Asn) or Glu-tRNA(Gln) in organisms which lack either or both of asparaginyl-tRNA or glutaminyl-tRNA synthetases. The reaction takes place in the presence of glutamine and ATP through an activated phospho-Asp-tRNA(Asn) or phospho-Glu-tRNA(Gln). This chain is Aspartyl/glutamyl-tRNA(Asn/Gln) amidotransferase subunit C, found in Streptococcus mutans serotype c (strain ATCC 700610 / UA159).